Here is a 358-residue protein sequence, read N- to C-terminus: Biotin synthase (358 aa).

Residues 47 to 306 (KNNSKIKLCA…ALYKIIMPYA (260 aa)) enclose the Radical SAM core domain. The [4Fe-4S] cluster site is built by Cys-65, Cys-69, and Cys-72. [2Fe-2S] cluster contacts are provided by Ser-142, Cys-174, Cys-233, and Arg-309.

Belongs to the radical SAM superfamily. Biotin synthase family. As to quaternary structure, homodimer. The cofactor is [4Fe-4S] cluster. [2Fe-2S] cluster is required as a cofactor.

The catalysed reaction is (4R,5S)-dethiobiotin + (sulfur carrier)-SH + 2 reduced [2Fe-2S]-[ferredoxin] + 2 S-adenosyl-L-methionine = (sulfur carrier)-H + biotin + 2 5'-deoxyadenosine + 2 L-methionine + 2 oxidized [2Fe-2S]-[ferredoxin]. The protein operates within cofactor biosynthesis; biotin biosynthesis; biotin from 7,8-diaminononanoate: step 2/2. Its function is as follows. Catalyzes the conversion of dethiobiotin (DTB) to biotin by the insertion of a sulfur atom into dethiobiotin via a radical-based mechanism. The sequence is that of Biotin synthase from Methanocaldococcus jannaschii (strain ATCC 43067 / DSM 2661 / JAL-1 / JCM 10045 / NBRC 100440) (Methanococcus jannaschii).